Consider the following 475-residue polypeptide: Aspartyl/glutamyl-tRNA(Asn/Gln) amidotransferase subunit B (475 aa).

The protein belongs to the GatB/GatE family. GatB subfamily. In terms of assembly, heterotrimer of A, B and C subunits.

It catalyses the reaction L-glutamyl-tRNA(Gln) + L-glutamine + ATP + H2O = L-glutaminyl-tRNA(Gln) + L-glutamate + ADP + phosphate + H(+). The catalysed reaction is L-aspartyl-tRNA(Asn) + L-glutamine + ATP + H2O = L-asparaginyl-tRNA(Asn) + L-glutamate + ADP + phosphate + 2 H(+). Allows the formation of correctly charged Asn-tRNA(Asn) or Gln-tRNA(Gln) through the transamidation of misacylated Asp-tRNA(Asn) or Glu-tRNA(Gln) in organisms which lack either or both of asparaginyl-tRNA or glutaminyl-tRNA synthetases. The reaction takes place in the presence of glutamine and ATP through an activated phospho-Asp-tRNA(Asn) or phospho-Glu-tRNA(Gln). The chain is Aspartyl/glutamyl-tRNA(Asn/Gln) amidotransferase subunit B from Thiobacillus denitrificans (strain ATCC 25259 / T1).